Reading from the N-terminus, the 330-residue chain is MKIAIDAMGGDHAPKAVVLGAMKAIKEYSDLHITLVGKEEEIRQYLTSEERITILHTDEKIESTDEPVRAVRRKKQASMVLAAQQVKDGVADACISAGSTGALMAAGLFVVGRMEGIERPALSPTMPTVDGEGFVMLDVGANVDAKPIHLYQYAVMGSVYAEKVRGIKNPRVGLLNVGTEGGKGNELSKQVFAMLKDAPINFVGNVESRDLLQGVADVVVCDGFTGNVALKSLEGTALALFSMLKEQLMSSFTSKLAAAVLKPKLMVLKDKMDYSEYGGAALFGLKAPVIKAHGSSNDQSIFSAIRQTREMVAKEVIPTISSVMEKEPLQ.

This sequence belongs to the PlsX family. Homodimer. Probably interacts with PlsY.

The protein localises to the cytoplasm. The catalysed reaction is a fatty acyl-[ACP] + phosphate = an acyl phosphate + holo-[ACP]. It participates in lipid metabolism; phospholipid metabolism. Functionally, catalyzes the reversible formation of acyl-phosphate (acyl-PO(4)) from acyl-[acyl-carrier-protein] (acyl-ACP). This enzyme utilizes acyl-ACP as fatty acyl donor, but not acyl-CoA. The polypeptide is Phosphate acyltransferase (Bacillus anthracis (strain A0248)).